A 336-amino-acid polypeptide reads, in one-letter code: Ephrin-B2 (336 aa).

Positions 1–28 (MAMARSRRDSVWKYCWGLLMVLCRTAIS) are cleaved as a signal peptide. Residues 29–232 (RSIVLEPIYW…LLGSEVALFA (204 aa)) lie on the Extracellular side of the membrane. The 137-residue stretch at 31-167 (IVLEPIYWNS…TRAMKILMKV (137 aa)) folds into the Ephrin RBD domain. Asparagine 39 is a glycosylation site (N-linked (GlcNAc...) asparagine). 2 cysteine pairs are disulfide-bonded: cysteine 65/cysteine 104 and cysteine 92/cysteine 156. Asparagine 142 carries an N-linked (GlcNAc...) asparagine glycan. The segment at 170-216 (DASSAGSARNHGPTRRPELEAGTNGRSSTTSPFVKPNPGSSTDGNSA) is disordered. The span at 193–216 (NGRSSTTSPFVKPNPGSSTDGNSA) shows a compositional bias: polar residues. The helical transmembrane segment at 233–253 (GIASGCIIFIVIIITLVVLLL) threads the bilayer. The Cytoplasmic portion of the chain corresponds to 254 to 336 (KYRRRHRKHS…QSPANIYYKV (83 aa)). Serine 263 carries the phosphoserine modification. At threonine 277 the chain carries Phosphothreonine. Omega-N-methylarginine is present on arginine 280. Positions 334–336 (YKV) match the PDZ-binding motif.

This sequence belongs to the ephrin family. In terms of assembly, interacts with PDZRN3. Binds to the ephrin receptor EPHA3, EPHA4 and EPHB4. In terms of processing, inducible phosphorylation of tyrosine residues in the cytoplasmic domain. As to expression, expressed in inner and outer pillar cells of the organ of Corti (at protein level). Expressed on lateral floor plate cells, specifically on commissural axon segments that have passed through the floor plate. Expressed in cells of the retinal ganglion cell layer during retinal axon guidance to the optic disk. Expressed in myogenic progenitor cells.

It localises to the cell membrane. It is found in the cell junction. Its subcellular location is the adherens junction. Its function is as follows. Cell surface transmembrane ligand for Eph receptors, a family of receptor tyrosine kinases which are crucial for migration, repulsion and adhesion during neuronal, vascular and epithelial development. Binds promiscuously Eph receptors residing on adjacent cells, leading to contact-dependent bidirectional signaling into neighboring cells. The signaling pathway downstream of the receptor is referred to as forward signaling while the signaling pathway downstream of the ephrin ligand is referred to as reverse signaling. Binds to receptor tyrosine kinase including EPHA4, EPHA3 and EPHB4. Together with EPHB4 plays a central role in heart morphogenesis and angiogenesis through regulation of cell adhesion and cell migration. EPHB4-mediated forward signaling controls cellular repulsion and segregation from EFNB2-expressing cells. May play a role in constraining the orientation of longitudinally projecting axons. In Mus musculus (Mouse), this protein is Ephrin-B2 (Efnb2).